The primary structure comprises 457 residues: Oxygen-independent coproporphyrinogen III oxidase (457 aa).

A Radical SAM core domain is found at 47-280 (RYPERPLSLY…QETIVSLTQA (234 aa)). Residue Y56 participates in S-adenosyl-L-methionine binding. [4Fe-4S] cluster contacts are provided by C62 and C66. Position 68 (F68) interacts with S-adenosyl-L-methionine. A [4Fe-4S] cluster-binding site is contributed by C69. Residues G112, 113-114 (GT), E145, Q172, R184, D209, A243, and I329 each bind S-adenosyl-L-methionine.

The protein belongs to the anaerobic coproporphyrinogen-III oxidase family. Monomer. It depends on [4Fe-4S] cluster as a cofactor.

The protein resides in the cytoplasm. It catalyses the reaction coproporphyrinogen III + 2 S-adenosyl-L-methionine = protoporphyrinogen IX + 2 5'-deoxyadenosine + 2 L-methionine + 2 CO2. Its pathway is porphyrin-containing compound metabolism; protoporphyrin-IX biosynthesis; protoporphyrinogen-IX from coproporphyrinogen-III (AdoMet route): step 1/1. Functionally, involved in the heme biosynthesis. Catalyzes the anaerobic oxidative decarboxylation of propionate groups of rings A and B of coproporphyrinogen III to yield the vinyl groups in protoporphyrinogen IX. This Salmonella typhi protein is Oxygen-independent coproporphyrinogen III oxidase (hemN).